The primary structure comprises 1430 residues: Death-associated protein kinase 1 (1430 aa).

Residues 13–275 (YDTGEELGSG…IQDSLQHPWI (263 aa)) form the Protein kinase domain. ATP contacts are provided by residues 19–27 (LGSGQFAVV), lysine 42, 94–96 (ELV), and glutamate 100. The active-site Proton acceptor is the aspartate 139. Residue aspartate 161 participates in ATP binding. Positions 267-334 (QDSLQHPWIK…RSNMSVARSD (68 aa)) are calmodulin-binding. Serine 289 is modified (phosphoserine; by RPS6KA1 and RPS6KA3). Positions 292–301 (NMEKFKKFAA) are autoinhibitory domain. The residue at position 308 (serine 308) is a Phosphoserine; by autocatalysis. 2 positions are modified to phosphoserine: serine 319 and serine 333. ANK repeat units lie at residues 378-407 (HGTP…RIDV), 411-440 (GGSN…PLDV), 444-473 (SGEM…NPNI), 477-506 (EEET…NVNI), 510-539 (EGET…DLNA), 543-572 (DGHI…FVDY), 576-605 (HGNT…NLDI), and 609-638 (YGRT…SVEA). The Roc domain maps to 681–955 (TQNLQPRIKL…NHLQEIRSQI (275 aa)). Position 734 is a phosphoserine; by MAPK1 (serine 734). An ANK 9 repeat occupies 875 to 904 (KLKNPLQVVLVATHADIMNVPRPAGGEFGY). A Phosphoserine modification is found at serine 1115. One copy of the ANK 10 repeat lies at 1162 to 1196 (EGDADIRLWVNGCKLANRGAELLVLLVNHGQGIEV). A Death domain is found at 1312–1396 (KLSRLLDPPD…DAADFLLKAS (85 aa)).

It belongs to the protein kinase superfamily. CAMK Ser/Thr protein kinase family. DAP kinase subfamily. In terms of assembly, interacts with KLHL20. Interacts (via death domain) with MAPK1 and MAPK3. Interacts with MAP1B (via N-terminus). Interacts with PRKD1 in an oxidative stress-regulated manner. Interacts with PIN1, PDCD6, BECN1, TSC2 and STX1A. Interacts (via kinase domain) with DAPK3 (via kinase domain). Interacts with GRINB. Interacts (via death domain) with UNC5B (via death domain). Interacts with UNC5C (via death domain). Mg(2+) serves as cofactor. Ubiquitinated by the BCR(KLHL20) E3 ubiquitin ligase complex, leading to its degradation by the proteasome. In terms of processing, removal of the C-terminal tail of isoform 2 (corresponding to amino acids 296-337 of isoform 2) by proteolytic cleavage stimulates maximally its membrane-blebbing function. Post-translationally, in response to mitogenic stimulation (PMA or EGF), phosphorylated at Ser-289; phosphorylation suppresses DAPK1 pro-apoptotic function. Autophosphorylation at Ser-308 inhibits its catalytic activity. Phosphorylation at Ser-734 by MAPK1 increases its catalytic activity and promotes cytoplasmic retention of MAPK1. Endoplasmic-stress can cause dephosphorylation at Ser-308. As to expression, isoform 2 is expressed in normal intestinal tissue as well as in colorectal carcinomas.

Its subcellular location is the cytoplasm. The protein localises to the cytoskeleton. It carries out the reaction L-seryl-[protein] + ATP = O-phospho-L-seryl-[protein] + ADP + H(+). It catalyses the reaction L-threonyl-[protein] + ATP = O-phospho-L-threonyl-[protein] + ADP + H(+). Activated by Ca(2+)/calmodulin. Regulated by a locking mechanism, involving autophosphorylation at Ser-308 and calmodulin binding. In the inactive state, Ser-308 is phosphorylated. Activation involves its dephosphorylation and a release-of-autoinhibition mechanism where binding of calmodulin induces a conformational change that relieves the steric block of the active site by the autoinhibitory domain. Activity is modulated by UNC5B and NTN1. UNC5B activates it by inhibiting the phosphorylation at Ser-308, whereas NTN1 inhibits UNC5B-mediated activation of DAPK1. Endoplasmic-stress activates by causing Ser-308 dephosphorylation. Functionally, calcium/calmodulin-dependent serine/threonine kinase involved in multiple cellular signaling pathways that trigger cell survival, apoptosis, and autophagy. Regulates both type I apoptotic and type II autophagic cell deaths signal, depending on the cellular setting. The former is caspase-dependent, while the latter is caspase-independent and is characterized by the accumulation of autophagic vesicles. Phosphorylates PIN1 resulting in inhibition of its catalytic activity, nuclear localization, and cellular function. Phosphorylates TPM1, enhancing stress fiber formation in endothelial cells. Phosphorylates STX1A and significantly decreases its binding to STXBP1. Phosphorylates PRKD1 and regulates JNK signaling by binding and activating PRKD1 under oxidative stress. Phosphorylates BECN1, reducing its interaction with BCL2 and BCL2L1 and promoting the induction of autophagy. Phosphorylates TSC2, disrupting the TSC1-TSC2 complex and stimulating mTORC1 activity in a growth factor-dependent pathway. Phosphorylates RPS6, MYL9 and DAPK3. Acts as a signaling amplifier of NMDA receptors at extrasynaptic sites for mediating brain damage in stroke. Cerebral ischemia recruits DAPK1 into the NMDA receptor complex and it phosphorylates GRINB at Ser-1303 inducing injurious Ca(2+) influx through NMDA receptor channels, resulting in an irreversible neuronal death. Required together with DAPK3 for phosphorylation of RPL13A upon interferon-gamma activation which is causing RPL13A involvement in transcript-selective translation inhibition. Its function is as follows. Isoform 2 cannot induce apoptosis but can induce membrane blebbing. The chain is Death-associated protein kinase 1 (DAPK1) from Homo sapiens (Human).